Here is a 258-residue protein sequence, read N- to C-terminus: MILDKIFEKTKEDLKERKLKLPYDMLGRSLASNPFFPKDVIKALKRVEKEVKIIAEVKKASPSKGVIREDFDPLSIALNYEKNKATAISVLTEPHFFKGSLEYLSLIRRYTQIPLLRKDFIFDEYQILEALVYGADFVLLIAKMLSMKELKKLLEFARHLGLEALVEIHDKEDLSKAIFAGADIIGINHRNLEDFTMDMSLCEKLIPQIPNSKIIIAESGLENKEFLEHLQNLGVDAFLIGEYFMREEDEGKALKALL.

Belongs to the TrpC family.

The enzyme catalyses 1-(2-carboxyphenylamino)-1-deoxy-D-ribulose 5-phosphate + H(+) = (1S,2R)-1-C-(indol-3-yl)glycerol 3-phosphate + CO2 + H2O. It participates in amino-acid biosynthesis; L-tryptophan biosynthesis; L-tryptophan from chorismate: step 4/5. The polypeptide is Indole-3-glycerol phosphate synthase (Campylobacter jejuni subsp. jejuni serotype O:23/36 (strain 81-176)).